The sequence spans 166 residues: NADH-quinone oxidoreductase subunit E (166 aa).

The [2Fe-2S] cluster site is built by C92, C97, C133, and C137.

Belongs to the complex I 24 kDa subunit family. As to quaternary structure, composed of 13 different subunits. Subunits NuoCD, E, F, and G constitute the peripheral sector of the complex. It depends on [2Fe-2S] cluster as a cofactor.

It catalyses the reaction a quinone + NADH + 5 H(+)(in) = a quinol + NAD(+) + 4 H(+)(out). In terms of biological role, NDH-1 shuttles electrons from NADH, via FMN and iron-sulfur (Fe-S) centers, to quinones in the respiratory chain. The immediate electron acceptor for the enzyme in this species is believed to be ubiquinone. Couples the redox reaction to proton translocation (for every two electrons transferred, four hydrogen ions are translocated across the cytoplasmic membrane), and thus conserves the redox energy in a proton gradient. The sequence is that of NADH-quinone oxidoreductase subunit E (nuoE) from Salmonella typhi.